The primary structure comprises 230 residues: Fibrillarin-like rRNA/tRNA 2'-O-methyltransferase (230 aa).

Residues 87 to 88 (TT), 105 to 106 (EF), 130 to 131 (DA), and 150 to 153 (DVAQ) contribute to the S-adenosyl-L-methionine site.

This sequence belongs to the methyltransferase superfamily. Fibrillarin family. As to quaternary structure, interacts with nop5. Component of box C/D small ribonucleoprotein (sRNP) particles that contain rpl7ae, FlpA and nop5, plus a guide RNA.

In terms of biological role, involved in pre-rRNA and tRNA processing. Utilizes the methyl donor S-adenosyl-L-methionine to catalyze the site-specific 2'-hydroxyl methylation of ribose moieties in rRNA and tRNA. Site specificity is provided by a guide RNA that base pairs with the substrate. Methylation occurs at a characteristic distance from the sequence involved in base pairing with the guide RNA. This Methanococcus vannielii (strain ATCC 35089 / DSM 1224 / JCM 13029 / OCM 148 / SB) protein is Fibrillarin-like rRNA/tRNA 2'-O-methyltransferase.